Here is a 280-residue protein sequence, read N- to C-terminus: Nuclear egress protein 1 (280 aa).

The segment at 86 to 203 adopts a CCCH-type zinc-finger fold; sequence CLTLSPYGHS…YIIFTSLTLH (118 aa).

Belongs to the herpesviridae NEC1 protein family. As to quaternary structure, forms a heterohexameric complex with NEC2. Interacts with capsid vertex specific component 2/CVC2; this interaction directs the capsid to the host inner nuclear membrane to initiate budding. In terms of processing, phosphorylated at serine residues in the N-terminus. This phosphorylation regulates the localization within the inner nuclear membrane.

The protein localises to the host nucleus inner membrane. Functionally, plays an essential role in virion nuclear egress, the first step of virion release from infected cell. Within the host nucleus, NEC1 interacts with the newly formed capsid through the vertexes and directs it to the inner nuclear membrane by associating with NEC2. Induces the budding of the capsid at the inner nuclear membrane as well as its envelopment into the perinuclear space. There, the NEC1/NEC2 complex promotes the fusion of the enveloped capsid with the outer nuclear membrane and the subsequent release of the viral capsid into the cytoplasm where it will reach the secondary budding sites in the host Golgi or trans-Golgi network. This chain is Nuclear egress protein 1, found in Alcelaphine herpesvirus 1 (strain C500) (AlHV-1).